The following is a 434-amino-acid chain: MTAENATLLEPVLGKDEIGWMFVQEYYTYLNKEPNRLHCFYTKKSTLIHGDEGESISLCHGQQEIHNKILDLDFQNCKVLISNVDSLASSNGGIVIQVLGEMSNKGKLSRKFAQTFFLAEQPNGYFVLNDIFRFLREDVEEEEESPDAVEKEKKDVASEPYVNGVQSQEHLPSAKEEGHYQDPAATENNFATAALISNETDSLNQATLAVPEEPVIQVTEASVPSFVSQQENQLQDEALTSNSKNADAIGASDANVATAPKSWADLIARNHPDVKSQASVSSTASTTGQTVKGVNADQTQQPTAPYTQSNELLETSVFVKNIPPETSDVSLKSAMSIFGPVKAIEFARRKGTAYVDFVNHECVQLALNKKTLQINNATLNIEERRRLFSGKFNKSGDKKSNDNYNGMKRNFRKGNRGAFDGRSKEVTTSKKQNN.

One can recognise an NTF2 domain in the interval 18-134 (IGWMFVQEYY…YFVLNDIFRF (117 aa)). Disordered regions lie at residues 141-180 (EEEESPDAVEKEKKDVASEPYVNGVQSQEHLPSAKEEGHY) and 274-308 (VKSQASVSSTASTTGQTVKGVNADQTQQPTAPYTQ). The residue at position 145 (Ser-145) is a Phosphoserine. Residues 148-157 (AVEKEKKDVA) show a composition bias toward basic and acidic residues. Low complexity predominate over residues 276–291 (SQASVSSTASTTGQTV). Residues 296–308 (ADQTQQPTAPYTQ) are compositionally biased toward polar residues. The RRM domain occupies 315–386 (TSVFVKNIPP…ATLNIEERRR (72 aa)). The segment at 390–434 (GKFNKSGDKKSNDNYNGMKRNFRKGNRGAFDGRSKEVTTSKKQNN) is disordered. Positions 419-428 (FDGRSKEVTT) are enriched in basic and acidic residues.

Functionally, probable scaffold protein that may be involved in mRNA transport. The protein is Putative G3BP-like protein (nxt3) of Schizosaccharomyces pombe (strain 972 / ATCC 24843) (Fission yeast).